The sequence spans 190 residues: UPF0301 protein Pden_0436 (190 aa).

It belongs to the UPF0301 (AlgH) family.

The chain is UPF0301 protein Pden_0436 from Paracoccus denitrificans (strain Pd 1222).